We begin with the raw amino-acid sequence, 1756 residues long: MTDLRKLEALQALHAELVAVRQHRFEGLQVLETLLEEQTDAFKALIAKPARDTKDREALGKEPKKLKIGEEEYSLNEDFVNDCLKLADELDLNEKESARILIDCDAEGDVETQSRPLWECGVIRFHQERKYLLDCMRLILEIAADEDIDAGLQESFGVAAEDKIFGIPPPWERNKENQPTQVKKFIPRCMEAMKGVRSMLQCMADKANARNMLQQASLVRPLDNQETLDFSRLSLVEQHECLASILHAAVQRHHATIADFQDFIKILRKWDKYDHFLIHLIPVLAAYITEFGSPEGMGDLQQARRLNDFICKGGDEDSWALPVLGAAVRAWWIAEHNGFYLDDTVQDLRGINLDEEDEQRTKQFLDALKEGAFDFILSVAADCKAQEWQDPSQLGARQWLQRKIPSLPSEPFPFSHFLQHSLMVHLEGFVDATISNLPDVLRKLRTEEDEQRQLRPNHEQDMDLERFLIIISYAYEGRPDAAMSFWEDPDSNLAGFLQWASRRASTPLVSAFCEMLRCLADNEECATAAHNFLLDEGHQASGKMKRSQSLTWSQIFKELEYFTTKVCSERPNPPQASMHRPGRPGADPAEIEPESALMLECYLRLIAKLATESEIARKRLIMDEDFNLVDTILKLSVGVIPHRLRACIFYVLKALMIRKTHEELDAMWRWVEAWMTNPFSSLPGSQGAPQRISFLGQTPGPQECMEMMFREFGTGFEQSNAFIQLLTTLLVPPEGLNSLNDSVPFPEWLGSSIRTLGIEPYVDFVFDVFANRTKDISDPSQLRILRLSCLDFVMVCLVTFNEDLIVLGHESNISIDDAMAATNLATYVRLHPFSRVMEWLFNEKVITSLINTIHQDPISLGSASPDSPLVVSILRAIQVMIKALELQETYLHLVRPEVLRYQGEAGVRRKPVANAAYSAFEDGILSHLSLVVDLGKYCNLGHAELTLACLKLLEKISTSSRILSAWSPDSGRLGHRNKAIVQLERNGEGETISASLSASIMATLDPALAASGENYRVKLAILDFLYACLRATPDQPTIAHQLLGFHCELSKLGIEPKGPFDMQKSLFHSLLNVLITLTVSEEEQGMRGYLVTLKYRVLRILQLLWKSPLSASLVMDELRATNFLFHMLLREVQIQPQLPWDGQLVTGCEFLLSDASLAYIDYLASRAAIFEYIGKELCSVSQNRIPSIKRQIFDALNGQIFVDEEAPLTIPSIFDFFDFINTDYKWEEIPSPHFTYLKDLDLGPCILEHKYAGVHYDIRKAQEILALKRKEYEHSQLATPEFLETVELEEKVLIEWLTVRNRANLLLTARLNLLQAWANLLLVMIESNDFKSTPKMAFLLQALQAILPTLEAFSSLKSDEAFELARVAKVLLWKLDFSQDSDAGLDREQFTVGNLIGDKLFQLFQLCLSAISQCSGTPELRSLYYSICYRYLTAVVDNDATVAATPASSTIGPTRSVTNARARTLKAITLYGDRLLNVICDDAYGSDTTCQTAAMILLNALVHTSRASSAAGVSPADVDCPIIDALNRLNFIGVLVDSLKEILNEWLAPSSTFDPSLSTNASPSLPIPASPSQQYTSAKLALLLQLCQTRQGAKYVLQANLFRALEQSGVFAADPELVEVDSESGVPRVVALERHYALLVALARVVGAAVTARGAHNIVQGRKFLTQHRGLVVHVLKKNAGIGGGVVGNSLASSINGGSTATMTRRDEILAQQALEERIEELAEAFMLLITATGFLEYESEQVPSEQPRAHTTFFH.

Belongs to the NUP186/NUP192/NUP205 family. Component of the nuclear pore complex (NPC). NPC constitutes the exclusive means of nucleocytoplasmic transport. NPCs allow the passive diffusion of ions and small molecules and the active, nuclear transport receptor-mediated bidirectional transport of macromolecules such as proteins, RNAs, ribonucleoparticles (RNPs), and ribosomal subunits across the nuclear envelope. Due to its 8-fold rotational symmetry, all subunits are present with 8 copies or multiples thereof. Part of a tetrameric NUP192-NUP170-NIC96-NUP53 module.

The protein resides in the nucleus. Its subcellular location is the nuclear pore complex. In terms of biological role, functions as a component of the nuclear pore complex (NPC). NPC components, collectively referred to as nucleoporins (NUPs), can play the role of both NPC structural components and of docking or interaction partners for transiently associated nuclear transport factors. NUP192 is located to the NPC core at the nuclear membrane and is essential for de novo assembly of NPCs. This chain is Nucleoporin NUP192 (NUP192), found in Chaetomium thermophilum (strain DSM 1495 / CBS 144.50 / IMI 039719) (Thermochaetoides thermophila).